The following is a 107-amino-acid chain: Urease subunit beta (107 aa).

The protein belongs to the urease beta subunit family. As to quaternary structure, heterotrimer of UreA (gamma), UreB (beta) and UreC (alpha) subunits. Three heterotrimers associate to form the active enzyme.

It localises to the cytoplasm. The enzyme catalyses urea + 2 H2O + H(+) = hydrogencarbonate + 2 NH4(+). It functions in the pathway nitrogen metabolism; urea degradation; CO(2) and NH(3) from urea (urease route): step 1/1. The sequence is that of Urease subunit beta from Teredinibacter turnerae (strain ATCC 39867 / T7901).